Here is a 557-residue protein sequence, read N- to C-terminus: Thermosome subunit 2 (557 aa).

The segment at 527-557 (DLSTGGDDDEEGGAPGGMGGMGGMGGMGGAM) is disordered. Gly residues predominate over residues 539–557 (GAPGGMGGMGGMGGMGGAM).

Belongs to the TCP-1 chaperonin family. The thermosome or CCT complex is a oligomeric complex of two octameric double-ring structures; the complex is probably a heterooligomer of CCT1, CCT2 and CCT3 with yet unknown stoichiometry.

In terms of biological role, molecular chaperone that assists in the folding or refolding of nascent or denatured proteins along with ATP hydrolysis. ATPase activity is highest in thermosome assemblies containing CCT1:CCT2, followed by assemblies containing CCT1:CCT2:CCT3. Seems to contribute to thermosome ATPase activity. Not required for growth. This Haloferax volcanii (strain ATCC 29605 / DSM 3757 / JCM 8879 / NBRC 14742 / NCIMB 2012 / VKM B-1768 / DS2) (Halobacterium volcanii) protein is Thermosome subunit 2 (cct2).